The chain runs to 307 residues: Acyl transferase (307 aa).

Active-site charge relay system residues include Ser116, Asp213, and His243.

The protein belongs to the LuxD family.

It participates in lipid metabolism; fatty acid reduction for biolumincescence. Acyl transferase is part of the fatty acid reductase system required for aldehyde biosynthesis; it produces fatty acids for the luminescent reaction. This is Acyl transferase from Aliivibrio fischeri (Vibrio fischeri).